The primary structure comprises 328 residues: Biotin synthase (328 aa).

Positions 41–260 (TAIETASLLS…VALARILMPA (220 aa)) constitute a Radical SAM core domain. Cysteine 56, cysteine 60, and cysteine 63 together coordinate [4Fe-4S] cluster. 4 residues coordinate [2Fe-2S] cluster: cysteine 100, cysteine 131, cysteine 191, and arginine 264.

This sequence belongs to the radical SAM superfamily. Biotin synthase family. Homodimer. Requires [4Fe-4S] cluster as cofactor. [2Fe-2S] cluster is required as a cofactor.

It carries out the reaction (4R,5S)-dethiobiotin + (sulfur carrier)-SH + 2 reduced [2Fe-2S]-[ferredoxin] + 2 S-adenosyl-L-methionine = (sulfur carrier)-H + biotin + 2 5'-deoxyadenosine + 2 L-methionine + 2 oxidized [2Fe-2S]-[ferredoxin]. It participates in cofactor biosynthesis; biotin biosynthesis; biotin from 7,8-diaminononanoate: step 2/2. In terms of biological role, catalyzes the conversion of dethiobiotin (DTB) to biotin by the insertion of a sulfur atom into dethiobiotin via a radical-based mechanism. The sequence is that of Biotin synthase from Cereibacter sphaeroides (strain ATCC 17029 / ATH 2.4.9) (Rhodobacter sphaeroides).